Here is a 382-residue protein sequence, read N- to C-terminus: Quinolinate synthase (382 aa).

Iminosuccinate contacts are provided by H63 and S84. A [4Fe-4S] cluster-binding site is contributed by C129. Iminosuccinate contacts are provided by residues 155 to 157 and S172; that span reads YAN. Residue C216 coordinates [4Fe-4S] cluster. Iminosuccinate contacts are provided by residues 242–244 and T259; that span reads HPE. C313 is a binding site for [4Fe-4S] cluster.

It belongs to the quinolinate synthase family. Type 1 subfamily. [4Fe-4S] cluster serves as cofactor.

The protein localises to the cytoplasm. The enzyme catalyses iminosuccinate + dihydroxyacetone phosphate = quinolinate + phosphate + 2 H2O + H(+). It participates in cofactor biosynthesis; NAD(+) biosynthesis; quinolinate from iminoaspartate: step 1/1. Its function is as follows. Catalyzes the condensation of iminoaspartate with dihydroxyacetone phosphate to form quinolinate. The sequence is that of Quinolinate synthase from Ralstonia pickettii (strain 12J).